The following is a 370-amino-acid chain: F-box/kelch-repeat protein At4g38940 (370 aa).

Positions 18–64 constitute an F-box domain; it reads PCLISLLPEEIVVDIVARVPRCYYPTLSQVSRRFRSLVASPEIYKRR. 3 Kelch repeats span residues 131–177, 178–230, and 263–315; these read NIFV…LIDR, KIYV…VIGG, and SACV…SYTG.

Part of a SCF (ASK-cullin-F-box) protein ligase complex. Interacts with SKP1A/ASK1, SKP1B/ASK2, ASK11, ASK13 and ASK18.

It localises to the nucleus. It participates in protein modification; protein ubiquitination. Component of SCF(ASK-cullin-F-box) E3 ubiquitin ligase complexes, which may mediate the ubiquitination and subsequent proteasomal degradation of target proteins. This is F-box/kelch-repeat protein At4g38940 from Arabidopsis thaliana (Mouse-ear cress).